The primary structure comprises 139 residues: D-ribose pyranase (139 aa).

The active-site Proton donor is the histidine 20. Residues aspartate 28, histidine 106, and 128-130 (YAN) contribute to the substrate site.

This sequence belongs to the RbsD / FucU family. RbsD subfamily. As to quaternary structure, homodecamer.

The protein localises to the cytoplasm. The catalysed reaction is beta-D-ribopyranose = beta-D-ribofuranose. The protein operates within carbohydrate metabolism; D-ribose degradation; D-ribose 5-phosphate from beta-D-ribopyranose: step 1/2. Catalyzes the interconversion of beta-pyran and beta-furan forms of D-ribose. This chain is D-ribose pyranase, found in Escherichia coli O6:H1 (strain CFT073 / ATCC 700928 / UPEC).